The following is a 30-amino-acid chain: Cysteine-rich venom protein mossambin (30 aa).

Residues 1 to 30 (NVDFNSESTRRKKKQNEIVDLHNSLRRTVN) are disordered.

The protein belongs to the CRISP family. Post-translationally, contains 8 disulfide bonds. In terms of tissue distribution, expressed by the venom gland.

It localises to the secreted. Inhibits calcium-activated potassium channels (KCa), voltage-gated potassium channel (Kv), and the calcium release channel/ryanodine receptor (RyR). This Naja mossambica (Mozambique spitting cobra) protein is Cysteine-rich venom protein mossambin.